The primary structure comprises 277 residues: Inositol monophosphatase 1 (277 aa).

Residues glutamate 70, aspartate 90, isoleucine 92, and aspartate 93 each contribute to the Mg(2+) site. Residue glutamate 70 participates in substrate binding. Residues 92-95, 194-196, glutamate 213, and aspartate 220 contribute to the substrate site; these read IDGT and GTA. Aspartate 220 serves as a coordination point for Mg(2+).

This sequence belongs to the inositol monophosphatase superfamily. In terms of assembly, homodimer. Requires Mg(2+) as cofactor. Ubiquitous.

The protein resides in the cytoplasm. The catalysed reaction is a myo-inositol phosphate + H2O = myo-inositol + phosphate. The enzyme catalyses 1D-myo-inositol 1-phosphate + H2O = myo-inositol + phosphate. It catalyses the reaction 1D-myo-inositol 2-phosphate + H2O = myo-inositol + phosphate. It carries out the reaction 1D-myo-inositol 3-phosphate + H2O = myo-inositol + phosphate. The catalysed reaction is 1D-myo-inositol 4-phosphate + H2O = myo-inositol + phosphate. The enzyme catalyses 1D-myo-inositol 5-phosphate + H2O = myo-inositol + phosphate. It catalyses the reaction 1D-myo-inositol 6-phosphate + H2O = myo-inositol + phosphate. It carries out the reaction scyllo-inositol 1-phosphate + H2O = scyllo-inositol + phosphate. The catalysed reaction is alpha-D-galactose 1-phosphate + H2O = D-galactose + phosphate. The enzyme catalyses alpha-D-glucose 1-phosphate + H2O = D-glucose + phosphate. It catalyses the reaction D-glucose 6-phosphate + H2O = D-glucose + phosphate. It carries out the reaction beta-D-fructose 1-phosphate + H2O = D-fructose + phosphate. The catalysed reaction is glycerol 2-phosphate + H2O = glycerol + phosphate. The enzyme catalyses adenosine 2'-phosphate + H2O = adenosine + phosphate. It participates in polyol metabolism; myo-inositol biosynthesis; myo-inositol from D-glucose 6-phosphate: step 2/2. With respect to regulation, activity with myo-inositol monophosphate and D-galactose 1-phosphate is inhibited by Li(+), Ca(2+) and Mn(2+), but also by Mg(2+) at concentrations above 3 mM. Its function is as follows. Phosphatase involved in the dephosphorylation of myo-inositol monophosphate to generate myo-inositol. Is also able to dephosphorylate scyllo-inositol-phosphate, myo-inositol 1,4-diphosphate, scyllo-inositol-1,3-diphosphate and scyllo-inositol-1,4-diphosphate. Also dephosphorylates in vitro other sugar-phosphates including D-galactose-1-phosphate, glucose-1-phosphate, glucose-6-phosphate, fructose-1-phosphate, beta-glycerophosphate and 2'-AMP. Responsible for the provision of inositol required for synthesis of phosphatidylinositol and polyphosphoinositides, and involved in maintaining normal brain function. Has been implicated as the pharmacological target for lithium Li(+) action in brain. Is equally active with myo-inositol monophosphate and D-galactose 1-phosphate. The sequence is that of Inositol monophosphatase 1 (Impa1) from Rattus norvegicus (Rat).